A 226-amino-acid polypeptide reads, in one-letter code: Phospholipase Culp4 (226 aa).

An N-terminal signal peptide occupies residues 1–45; the sequence is MIPRPQPHSGRWRAGAARRLTSLVAAAFAAATLLLTPALAPPASA. A disulfide bridge connects residues cysteine 47 and cysteine 117. Serine 128 (nucleophile) is an active-site residue. Residues cysteine 191 and cysteine 198 are joined by a disulfide bond. Aspartate 195 is an active-site residue. The Proton donor/acceptor role is filled by histidine 207.

This sequence belongs to the cutinase family. In terms of assembly, homodimer.

Its subcellular location is the cell membrane. It is found in the secreted. The protein resides in the cell wall. The catalysed reaction is 1,2-dihexadecanoyl-sn-glycero-3-phosphocholine + H2O = 1-hexadecanoyl-sn-glycero-3-phosphocholine + hexadecanoate + H(+). It carries out the reaction a butanoate ester + H2O = an aliphatic alcohol + butanoate + H(+). With respect to regulation, inhibited by high concentrations of paraoxon. Inhibited by tetrahydrolipstatin (THL), a specific lipase inhibitor. Functionally, A2-type phospholipase, which is probably involved in the degradation of macrophage membrane. Hydrolyzes dipalmitoylphosphatidylcholine. Also shows moderate esterase activity and hydrolyzes the p-nitrophenol-linked aliphatic ester pNP-butyrate (C4). Does not exhibit cutinase activity. This is Phospholipase Culp4 from Mycobacterium tuberculosis (strain ATCC 25618 / H37Rv).